The sequence spans 245 residues: Extracellular protein ARB_04177 (245 aa).

It is found in the secreted. This Arthroderma benhamiae (strain ATCC MYA-4681 / CBS 112371) (Trichophyton mentagrophytes) protein is Extracellular protein ARB_04177.